Here is a 128-residue protein sequence, read N- to C-terminus: UPF0325 protein PMI2289 (128 aa).

The protein belongs to the UPF0325 family.

In Proteus mirabilis (strain HI4320), this protein is UPF0325 protein PMI2289.